The sequence spans 226 residues: ATP synthase subunit a (226 aa).

A run of 6 helical transmembrane segments spans residues phenylalanine 18 to alanine 38, leucine 79 to phenylalanine 99, serine 105 to isoleucine 125, phenylalanine 134 to isoleucine 154, leucine 179 to phenylalanine 199, and glycine 201 to leucine 221.

This sequence belongs to the ATPase A chain family. F-type ATPases have 2 components, CF(1) - the catalytic core - and CF(0) - the membrane proton channel. CF(1) has five subunits: alpha(3), beta(3), gamma(1), delta(1), epsilon(1). CF(0) has three main subunits: a(1), b(2) and c(9-12). The alpha and beta chains form an alternating ring which encloses part of the gamma chain. CF(1) is attached to CF(0) by a central stalk formed by the gamma and epsilon chains, while a peripheral stalk is formed by the delta and b chains.

The protein localises to the cell inner membrane. Its function is as follows. Key component of the proton channel; it plays a direct role in the translocation of protons across the membrane. This is ATP synthase subunit a from Helicobacter pylori (strain HPAG1).